Reading from the N-terminus, the 211-residue chain is Intermembrane phospholipid transport system binding protein MlaC (211 aa).

The N-terminal stretch at 1 to 21 is a signal peptide; it reads MFKRLMMVALLVIAPLSAATA.

The protein belongs to the MlaC/ttg2D family. As to quaternary structure, interacts with the MlaA-OmpF outer membrane complex and with the inner membrane ABC transporter complex MlaFEDB, via direct interaction with MlaD.

It is found in the periplasm. Functionally, involved in a phospholipid transport pathway that maintains lipid asymmetry in the outer membrane by retrograde trafficking of phospholipids from the outer membrane to the inner membrane. May transfer phospholipid across the periplasmic space and deliver it to the MlaFEDB complex at the inner membrane. The chain is Intermembrane phospholipid transport system binding protein MlaC from Escherichia coli (strain K12).